The sequence spans 300 residues: Haloalkane dehalogenase (300 aa).

Positions 32-155 (AIVFQHGNPT…PAVRGVFQGF (124 aa)) constitute an AB hydrolase-1 domain. Aspartate 109 acts as the Nucleophile in catalysis. The active-site Proton donor is glutamate 133. Histidine 273 serves as the catalytic Proton acceptor.

This sequence belongs to the haloalkane dehalogenase family. Type 2 subfamily. Monomer.

It catalyses the reaction 1-haloalkane + H2O = a halide anion + a primary alcohol + H(+). Functionally, catalyzes hydrolytic cleavage of carbon-halogen bonds in halogenated aliphatic compounds, leading to the formation of the corresponding primary alcohols, halide ions and protons. The sequence is that of Haloalkane dehalogenase from Mycobacterium tuberculosis (strain ATCC 25177 / H37Ra).